The chain runs to 430 residues: Adenylosuccinate synthetase (430 aa).

GTP contacts are provided by residues 13–19 and 41–43; these read GDEGKGK and GHT. Catalysis depends on Asp14, which acts as the Proton acceptor. Mg(2+)-binding residues include Asp14 and Gly41. Residues 14–17, 39–42, Thr130, Arg144, Gln225, Thr240, and Arg304 each bind IMP; these read DEGK and NAGH. His42 serves as the catalytic Proton donor. 300–306 is a substrate binding site; that stretch reads ASTGRPR. GTP is bound by residues Arg306, 332–334, and 414–416; these read KLD and STG.

This sequence belongs to the adenylosuccinate synthetase family. In terms of assembly, homodimer. The cofactor is Mg(2+).

It localises to the cytoplasm. It carries out the reaction IMP + L-aspartate + GTP = N(6)-(1,2-dicarboxyethyl)-AMP + GDP + phosphate + 2 H(+). It functions in the pathway purine metabolism; AMP biosynthesis via de novo pathway; AMP from IMP: step 1/2. Plays an important role in the de novo pathway of purine nucleotide biosynthesis. Catalyzes the first committed step in the biosynthesis of AMP from IMP. The sequence is that of Adenylosuccinate synthetase from Xanthomonas oryzae pv. oryzae (strain PXO99A).